A 642-amino-acid polypeptide reads, in one-letter code: Threonine--tRNA ligase (642 aa).

One can recognise a TGS domain in the interval 1-61; the sequence is MPIITLPDGS…TEDAELQLIT (61 aa). Residues 242-535 form a catalytic region; it reads DHRKLGKSLD…LVEHYEGKFP (294 aa). Cysteine 333, histidine 384, and histidine 512 together coordinate Zn(2+).

This sequence belongs to the class-II aminoacyl-tRNA synthetase family. In terms of assembly, homodimer. Zn(2+) is required as a cofactor.

Its subcellular location is the cytoplasm. The catalysed reaction is tRNA(Thr) + L-threonine + ATP = L-threonyl-tRNA(Thr) + AMP + diphosphate + H(+). Functionally, catalyzes the attachment of threonine to tRNA(Thr) in a two-step reaction: L-threonine is first activated by ATP to form Thr-AMP and then transferred to the acceptor end of tRNA(Thr). Also edits incorrectly charged L-seryl-tRNA(Thr). The sequence is that of Threonine--tRNA ligase from Hydrogenovibrio crunogenus (strain DSM 25203 / XCL-2) (Thiomicrospira crunogena).